A 247-amino-acid polypeptide reads, in one-letter code: Carboxy-S-adenosyl-L-methionine synthase (247 aa).

Residues Tyr-38, Gly-63 to Ser-65, Asn-131, and Arg-198 each bind S-adenosyl-L-methionine.

This sequence belongs to the class I-like SAM-binding methyltransferase superfamily. Cx-SAM synthase family. Homodimer.

It catalyses the reaction prephenate + S-adenosyl-L-methionine = carboxy-S-adenosyl-L-methionine + 3-phenylpyruvate + H2O. In terms of biological role, catalyzes the conversion of S-adenosyl-L-methionine (SAM) to carboxy-S-adenosyl-L-methionine (Cx-SAM). In Desulforapulum autotrophicum (strain ATCC 43914 / DSM 3382 / VKM B-1955 / HRM2) (Desulfobacterium autotrophicum), this protein is Carboxy-S-adenosyl-L-methionine synthase.